Consider the following 522-residue polypeptide: MDFLLLGLCLYWLLRRPSGVVLCLLGACFQMLPAAPSGCPQLCRCEGRLLYCEALNLTEAPHNLSGLLGLSLRYNSLSELRAGQFTGLMQLTWLYLDHNHICSVQGDAFQKLRRVKELTLSSNQITQLPNTTFRPMPNLRSVDLSYNKLQALAPDLFHGLRKLTTLHMRANAIQFVPVRIFQDCRSLKFLDIGYNQLKSLARNSFAGLFKLTELHLEHNDLVKVNFAHFPRLISLHSLCLRRNKVAIVVSSLDWVWNLEKMDLSGNEIEYMEPHVFETVPHLQSLQLDSNRLTYIEPRILNSWKSLTSITLAGNLWDCGRNVCALASWLNNFQGRYDGNLQCASPEYAQGEDVLDAVYAFHLCEDGAEPTSGHLLSAVTNRSDLGPPASSATTLADGGEGQHDGTFEPATVALPGGEHAENAVQIHKVVTGTMALIFSFLIVVLVLYVSWKCFPASLRQLRQCFVTQRRKQKQKQTMHQMAAMSAQEYYVDYKPNHIEGALVIINEYGSCTCHQQPARECEV.

Positions 1–34 (MDFLLLGLCLYWLLRRPSGVVLCLLGACFQMLPA) are cleaved as a signal peptide. Residues 35–63 (APSGCPQLCRCEGRLLYCEALNLTEAPHN) enclose the LRRNT domain. Topologically, residues 35–427 (APSGCPQLCR…HAENAVQIHK (393 aa)) are extracellular. 2 N-linked (GlcNAc...) asparagine glycosylation sites follow: Asn-56 and Asn-63. 10 LRR repeats span residues 64–87 (LSGL…QFTG), 89–111 (MQLT…AFQK), 112–135 (LRRV…TFRP), 137–159 (PNLR…LFHG), 161–183 (RKLT…IFQD), 184–207 (CRSL…SFAG), 209–231 (FKLT…HFPR), 233–255 (ISLH…LDWV), 256–278 (WNLE…VFET), and 279–302 (VPHL…ILNS). Asn-130 carries N-linked (GlcNAc...) asparagine glycosylation. Residues 314–365 (NLWDCGRNVCALASWLNNFQGRYDGNLQCASPEYAQGEDVLDAVYAFHLCED) enclose the LRRCT domain. A glycan (N-linked (GlcNAc...) asparagine) is linked at Asn-380. The segment at 382-401 (SDLGPPASSATTLADGGEGQ) is disordered. The helical transmembrane segment at 428–448 (VVTGTMALIFSFLIVVLVLYV) threads the bilayer. The Cytoplasmic portion of the chain corresponds to 449–522 (SWKCFPASLR…HQQPARECEV (74 aa)).

The protein belongs to the LRRTM family. As to expression, predominantly expressed in forebrain regions including thalamus and cerebral cortex.

It localises to the cell membrane. Its subcellular location is the postsynaptic cell membrane. Exhibits strong synaptogenic activity, restricted to excitatory presynaptic differentiation, acting at both pre- and postsynaptic level. This is Leucine-rich repeat transmembrane neuronal protein 1 (LRRTM1) from Homo sapiens (Human).